The primary structure comprises 144 residues: Small ribosomal subunit protein bS6 (144 aa).

Residues 97–144 are disordered; sequence DTEQSLIMKSKDEKGDKPERSERRRRDDEEVDAAPAATDTDGDNAEAA. The span at 105-124 shows a compositional bias: basic and acidic residues; sequence KSKDEKGDKPERSERRRRDD.

It belongs to the bacterial ribosomal protein bS6 family.

Binds together with bS18 to 16S ribosomal RNA. This chain is Small ribosomal subunit protein bS6, found in Xanthomonas campestris pv. campestris (strain B100).